Consider the following 379-residue polypeptide: Cytochrome b (379 aa).

A run of 4 helical transmembrane segments spans residues 33–53 (FGSL…FLAM), 77–98 (WTIR…FIHV), 113–133 (WNVG…GYVL), and 178–198 (FFAL…IHLL). Heme b-binding residues include H83 and H97. Positions 182 and 196 each coordinate heme b. H201 contributes to the a ubiquinone binding site. 4 helical membrane passes run 226 to 246 (TKDF…TLFY), 288 to 308 (LGGV…PLLQ), 320 to 340 (LSQF…WIGG), and 347 to 367 (FITI…LIMP).

The protein belongs to the cytochrome b family. The cytochrome bc1 complex contains 11 subunits: 3 respiratory subunits (MT-CYB, CYC1 and UQCRFS1), 2 core proteins (UQCRC1 and UQCRC2) and 6 low-molecular weight proteins (UQCRH/QCR6, UQCRB/QCR7, UQCRQ/QCR8, UQCR10/QCR9, UQCR11/QCR10 and a cleavage product of UQCRFS1). This cytochrome bc1 complex then forms a dimer. The cofactor is heme b.

It is found in the mitochondrion inner membrane. In terms of biological role, component of the ubiquinol-cytochrome c reductase complex (complex III or cytochrome b-c1 complex) that is part of the mitochondrial respiratory chain. The b-c1 complex mediates electron transfer from ubiquinol to cytochrome c. Contributes to the generation of a proton gradient across the mitochondrial membrane that is then used for ATP synthesis. The sequence is that of Cytochrome b (MT-CYB) from Lepilemur edwardsi (Milne-Edwards's sportive lemur).